The following is a 103-amino-acid chain: Protein RALF-like 18 (103 aa).

A signal peptide spans 1–32; that stretch reads MMNNMKLLIIAVMIISAALLPALVVGSRPVKC. The propeptide at 33-58 is removed in mature form; it reads DNCMDGGEKEEIMKMSSGVDVSHRIL. A disulfide bridge connects residues Cys-92 and Cys-98.

This sequence belongs to the plant rapid alkalinization factor (RALF) family. Proteolytically cleaved, probably by S1P, a subtilisin-like serine protease (subtilase).

The protein resides in the secreted. In terms of biological role, cell signaling peptide that may regulate plant stress, growth, and development. Mediates a rapid alkalinization of extracellular space by mediating a transient increase in the cytoplasmic Ca(2+) concentration leading to a calcium-dependent signaling events through a cell surface receptor and a concomitant activation of some intracellular mitogen-activated protein kinases. This Arabidopsis thaliana (Mouse-ear cress) protein is Protein RALF-like 18 (RALFL18).